The following is a 284-amino-acid chain: Pantothenate synthetase (284 aa).

30-37 (MGNLHDGH) serves as a coordination point for ATP. His37 functions as the Proton donor in the catalytic mechanism. Gln61 contacts (R)-pantoate. Residue Gln61 participates in beta-alanine binding. Residue 149-152 (GEKD) coordinates ATP. Gln155 serves as a coordination point for (R)-pantoate. ATP contacts are provided by residues Ile178 and 186–189 (LSSR).

The protein belongs to the pantothenate synthetase family. Homodimer.

Its subcellular location is the cytoplasm. The enzyme catalyses (R)-pantoate + beta-alanine + ATP = (R)-pantothenate + AMP + diphosphate + H(+). It participates in cofactor biosynthesis; (R)-pantothenate biosynthesis; (R)-pantothenate from (R)-pantoate and beta-alanine: step 1/1. Functionally, catalyzes the condensation of pantoate with beta-alanine in an ATP-dependent reaction via a pantoyl-adenylate intermediate. The polypeptide is Pantothenate synthetase (Salmonella newport (strain SL254)).